The following is a 145-amino-acid chain: MFHHSLAAAAAALLALAAPGFAATHEVHMLNKGESGAMVFEPAFVRAEPGDVINFVPTDKSHNVEAIKEILPEGVESFKSKINESYTLTVTEPGLYGVKCTPHFGMGMVGLVQVGDAPENLDAAKTAKMPKKARERMDAELAQVN.

A signal peptide spans 1–22; that stretch reads MFHHSLAAAAAALLALAAPGFA. Positions 27-115 constitute a Plastocyanin-like domain; that stretch reads VHMLNKGESG…MGMVGLVQVG (89 aa). The Cu cation site is built by H62, C100, H103, and M108. A disordered region spans residues 126–145; sequence TAKMPKKARERMDAELAQVN.

Homodimer. Cu cation serves as cofactor.

The protein resides in the periplasm. Functionally, this soluble electron transfer copper protein is required for the inactivation of copper-containing nitrite reductase in the presence of oxygen. This chain is Pseudoazurin (pazS), found in Paracoccus pantotrophus (Thiosphaera pantotropha).